A 449-amino-acid polypeptide reads, in one-letter code: Bifunctional protein GlmU (449 aa).

Residues 1-226 form a pyrophosphorylase region; that stretch reads MVIVAVLAAG…YEEILGVNDR (226 aa). UDP-N-acetyl-alpha-D-glucosamine-binding positions include 7-10, Lys-21, Gln-73, and 78-79; these read LAAG and GT. Asp-103 contributes to the Mg(2+) binding site. Gly-140, Glu-155, Asn-170, and Asn-224 together coordinate UDP-N-acetyl-alpha-D-glucosamine. Asn-224 lines the Mg(2+) pocket. A linker region spans residues 227-247; it reads VQLAAAYQVLQNRIKKAWMQA. Positions 248-449 are N-acetyltransferase; the sequence is GVTLIDPASI…VVKPNWEPEA (202 aa). 2 residues coordinate UDP-N-acetyl-alpha-D-glucosamine: Arg-329 and Lys-347. Residue His-359 is the Proton acceptor of the active site. Positions 362 and 373 each coordinate UDP-N-acetyl-alpha-D-glucosamine. Acetyl-CoA is bound by residues Ala-376, 382 to 383, Ala-419, and Arg-436; that span reads NY.

It in the N-terminal section; belongs to the N-acetylglucosamine-1-phosphate uridyltransferase family. This sequence in the C-terminal section; belongs to the transferase hexapeptide repeat family. Homotrimer. Requires Mg(2+) as cofactor.

The protein resides in the cytoplasm. It carries out the reaction alpha-D-glucosamine 1-phosphate + acetyl-CoA = N-acetyl-alpha-D-glucosamine 1-phosphate + CoA + H(+). The enzyme catalyses N-acetyl-alpha-D-glucosamine 1-phosphate + UTP + H(+) = UDP-N-acetyl-alpha-D-glucosamine + diphosphate. The protein operates within nucleotide-sugar biosynthesis; UDP-N-acetyl-alpha-D-glucosamine biosynthesis; N-acetyl-alpha-D-glucosamine 1-phosphate from alpha-D-glucosamine 6-phosphate (route II): step 2/2. It participates in nucleotide-sugar biosynthesis; UDP-N-acetyl-alpha-D-glucosamine biosynthesis; UDP-N-acetyl-alpha-D-glucosamine from N-acetyl-alpha-D-glucosamine 1-phosphate: step 1/1. It functions in the pathway bacterial outer membrane biogenesis; LPS lipid A biosynthesis. In terms of biological role, catalyzes the last two sequential reactions in the de novo biosynthetic pathway for UDP-N-acetylglucosamine (UDP-GlcNAc). The C-terminal domain catalyzes the transfer of acetyl group from acetyl coenzyme A to glucosamine-1-phosphate (GlcN-1-P) to produce N-acetylglucosamine-1-phosphate (GlcNAc-1-P), which is converted into UDP-GlcNAc by the transfer of uridine 5-monophosphate (from uridine 5-triphosphate), a reaction catalyzed by the N-terminal domain. The sequence is that of Bifunctional protein GlmU from Thermosynechococcus vestitus (strain NIES-2133 / IAM M-273 / BP-1).